A 113-amino-acid chain; its full sequence is Large ribosomal subunit protein bL19 (113 aa).

The protein belongs to the bacterial ribosomal protein bL19 family.

Its function is as follows. This protein is located at the 30S-50S ribosomal subunit interface and may play a role in the structure and function of the aminoacyl-tRNA binding site. The polypeptide is Large ribosomal subunit protein bL19 (Mycobacterium leprae (strain Br4923)).